Here is a 100-residue protein sequence, read N- to C-terminus: Urease subunit gamma (100 aa).

Belongs to the urease gamma subunit family. In terms of assembly, heterotrimer of UreA (gamma), UreB (beta) and UreC (alpha) subunits. Three heterotrimers associate to form the active enzyme.

Its subcellular location is the cytoplasm. It catalyses the reaction urea + 2 H2O + H(+) = hydrogencarbonate + 2 NH4(+). It participates in nitrogen metabolism; urea degradation; CO(2) and NH(3) from urea (urease route): step 1/1. This is Urease subunit gamma from Verminephrobacter eiseniae (strain EF01-2).